The sequence spans 223 residues: Small ribosomal subunit protein uS5 (223 aa).

The span at 1-15 (MTEAVAAEATETAPA) shows a compositional bias: low complexity. The interval 1–51 (MTEAVAAEATETAPATDDRRGGRRGERGDRGQGRGDRGGRGGRDGGREAEK) is disordered. The segment covering 16–51 (TDDRRGGRRGERGDRGQGRGDRGGRGGRDGGREAEK) has biased composition (basic and acidic residues). The S5 DRBM domain maps to 54 to 117 (FVERVVTINR…EEAKKSFFRV (64 aa)).

The protein belongs to the universal ribosomal protein uS5 family. In terms of assembly, part of the 30S ribosomal subunit. Contacts proteins S4 and S8.

In terms of biological role, with S4 and S12 plays an important role in translational accuracy. Functionally, located at the back of the 30S subunit body where it stabilizes the conformation of the head with respect to the body. This Paenarthrobacter aurescens (strain TC1) protein is Small ribosomal subunit protein uS5.